The primary structure comprises 314 residues: Protoheme IX farnesyltransferase (314 aa).

A run of 8 helical transmembrane segments spans residues 36-56, 65-85, 114-134, 135-155, 179-199, 237-257, 259-279, and 290-310; these read IGIV…AISF, WGTF…GCIV, SVLT…MFTS, WYAT…YTIW, WAAI…IMFI, IIVY…TMGI, FAVI…TGLF, and IFIF…IVKL.

Belongs to the UbiA prenyltransferase family. Protoheme IX farnesyltransferase subfamily. Interacts with CtaA.

Its subcellular location is the cell membrane. The enzyme catalyses heme b + (2E,6E)-farnesyl diphosphate + H2O = Fe(II)-heme o + diphosphate. Its pathway is porphyrin-containing compound metabolism; heme O biosynthesis; heme O from protoheme: step 1/1. Converts heme B (protoheme IX) to heme O by substitution of the vinyl group on carbon 2 of heme B porphyrin ring with a hydroxyethyl farnesyl side group. This is Protoheme IX farnesyltransferase from Oceanobacillus iheyensis (strain DSM 14371 / CIP 107618 / JCM 11309 / KCTC 3954 / HTE831).